Here is a 101-residue protein sequence, read N- to C-terminus: uncharacterized protein (101 aa).

This is an uncharacterized protein from Methanocaldococcus jannaschii (strain ATCC 43067 / DSM 2661 / JAL-1 / JCM 10045 / NBRC 100440) (Methanococcus jannaschii).